Consider the following 394-residue polypeptide: Na(+)/H(+) antiporter NhaA (394 aa).

Helical transmembrane passes span 14–34, 59–79, 95–115, 125–145, 154–174, 179–199, 213–233, 254–274, 292–312, 328–348, and 363–383; these read AGGLILIIAAAIALLMANSAL, LLLWINDGLMAVFFLMIGLEV, VFPAIAALGGMLAPALIYLLF, GWAIPAATDIAFALGVMALLG, VFLLALAIIDDLGVIIIIALF, VSLQSLGIAAAAIALLAYMNW, LVLWVCILKSGVHATLAGVIV, GLHPWVAYLILPLFAFANAGV, IATGLFIGKPLGIFTFSWLAV, IFAVSVLCGIGFTMSIFIASL, and LGILLGSTTAAVVGYSLLRLV.

Belongs to the NhaA Na(+)/H(+) (TC 2.A.33) antiporter family.

It is found in the cell inner membrane. The catalysed reaction is Na(+)(in) + 2 H(+)(out) = Na(+)(out) + 2 H(+)(in). Its function is as follows. Na(+)/H(+) antiporter that extrudes sodium in exchange for external protons. This Yersinia pestis bv. Antiqua (strain Antiqua) protein is Na(+)/H(+) antiporter NhaA.